We begin with the raw amino-acid sequence, 199 residues long: MAWPCISRLCCLARRWNQLDRSDVAVPLTLHGYSDLDSEEPGTGGAASRRGQPPAGARDSGRDVPLTQYQRDFGLWTTPAGPKDPPPGRGPGAGGRRGKSSAQSSAPPAPGARGVYVLPIGDADAAAAVTTSYRQEFQAWTGVKPSRSTKTKPARVITTHTSGWDSSPGAGFQVPEVRKKFTPNPSAIFQASAPRILNV.

Residues Cys-5, Cys-10, and Cys-11 are each lipidated (S-palmitoyl cysteine). The tract at residues 33–110 (YSDLDSEEPG…SAQSSAPPAP (78 aa)) is disordered. The residue at position 38 (Ser-38) is a Phosphoserine. 2 mn regions span residues 130 to 143 (TTSYRQEFQAWTGV) and 165 to 177 (DSSPGAGFQVPEV). Ser-167 carries the phosphoserine modification.

It belongs to the STOP family. As to quaternary structure, interacts with calmodulin. In terms of processing, palmitoylated. Palmitoylation enhances association with microtubules.

The protein resides in the golgi apparatus. Its subcellular location is the cytoplasm. The protein localises to the cytoskeleton. Its function is as follows. May have microtubule-stabilizing activity. The chain is MAP6 domain-containing protein 1 (MAP6D1) from Homo sapiens (Human).